A 513-amino-acid chain; its full sequence is ATP synthase subunit alpha (513 aa).

Position 169 to 176 (169 to 176 (GDRQTGKS)) interacts with ATP.

It belongs to the ATPase alpha/beta chains family. As to quaternary structure, F-type ATPases have 2 components, CF(1) - the catalytic core - and CF(0) - the membrane proton channel. CF(1) has five subunits: alpha(3), beta(3), gamma(1), delta(1), epsilon(1). CF(0) has three main subunits: a(1), b(2) and c(9-12). The alpha and beta chains form an alternating ring which encloses part of the gamma chain. CF(1) is attached to CF(0) by a central stalk formed by the gamma and epsilon chains, while a peripheral stalk is formed by the delta and b chains.

It is found in the cell inner membrane. It carries out the reaction ATP + H2O + 4 H(+)(in) = ADP + phosphate + 5 H(+)(out). Produces ATP from ADP in the presence of a proton gradient across the membrane. The alpha chain is a regulatory subunit. In Blochmanniella floridana, this protein is ATP synthase subunit alpha.